Here is a 25-residue protein sequence, read N- to C-terminus: Unknown protein 4 (25 aa).

A compositionally biased stretch (basic and acidic residues) spans 1–10; sequence IEHNAEEIRK. Residues 1-25 are disordered; the sequence is IEHNAEEIRKTAIRTAVQNTAQQTK. Polar residues predominate over residues 16–25; the sequence is AVQNTAQQTK.

The protein is Unknown protein 4 of Lonomia obliqua (Moth).